The primary structure comprises 1678 residues: Hispidin synthase (1678 aa).

Residues 33-453 form an adenylation (A) domain region; sequence GEHRWSYREL…WLGRNTDFIQ (421 aa). In terms of domain architecture, Carrier 1 spans 586 to 661; the sequence is DELSNTVKHI…SLSNAVYAKL (76 aa). Residue Ser-620 is modified to O-(pantetheine 4'-phosphoryl)serine. Residues 683–1108 enclose the Ketosynthase family 3 (KS3) domain; sequence GKEIVVVGQA…GTLGGIVLEA (426 aa). Active-site for beta-ketoacyl synthase activity residues include Cys-852, His-988, and His-1029. The segment at 1201-1499 is malonyl-CoA:ACP transacylase (MAT) domain; that stretch reads YKRGALAFAF…VAWSLLLSNG (299 aa). Positions 1562–1582 are disordered; it reads EETLSSGSSTPTLENTDLDSG. Over residues 1564–1576 the composition is skewed to polar residues; it reads TLSSGSSTPTLEN. Residues 1597-1672 form the Carrier 2 domain; that stretch reads DDLRDSIVSS…EMVSNLVEQA (76 aa). Ser-1632 is subject to O-(pantetheine 4'-phosphoryl)serine.

In the N-terminal section; belongs to the NRP synthetase family.

It catalyses the reaction (E)-caffeate + 2 malonyl-CoA + ATP + H(+) = hispidin + AMP + 2 CO2 + diphosphate + 2 CoA. Its pathway is secondary metabolite biosynthesis. In terms of biological role, PKS-NRPS hybrid synthetase; part of the gene cluster that mediates the fungal bioluminescence cycle. Performs the biosynthesis of hispidin from caffeic acid by two cycles of addition of malonyl units followed by lactonization. The fungal bioluminescence cycle begins with the hispidin synthetase that catalyzes the formation of hispidin which is further hydroxylated by the hispidin-3-hydroxylase, yielding the fungal luciferin 3-hydroxyhispidin. The luciferase then produces an endoperoxide as a high-energy intermediate with decomposition that yields oxyluciferin (also known as caffeoylpyruvate) and light emission. Oxyluciferin can be recycled to caffeic acid by caffeoylpyruvate hydrolase. This is Hispidin synthase from Neonothopanus nambi (Agaricus nambi).